Reading from the N-terminus, the 266-residue chain is Protein crossbronx-like (266 aa).

The 164-residue stretch at 15–178 (KQGYKILAEY…IQELAISSRR (164 aa)) folds into the UBC core domain. The segment at 216–266 (EATCEDDSPPAELLGHIDSSRQLDEDEANQRGKLQAATTDLQHGARCSVAQ) is disordered.

Belongs to the ubiquitin-conjugating enzyme family. FTS subfamily.

In Drosophila ananassae (Fruit fly), this protein is Protein crossbronx-like.